The primary structure comprises 247 residues: MMMSSRSSVSLGVLLLLAVILSAGAADPDILTDFVVPSDTDPSGIDGAFFTYKNLVTGNSGDPAKLTVTKATHAEFPALLGQSVSYAALVFGAGTVNPPHIHPRASELLVVVQGPLLVGLVDAARNGTVYTQTLQTGDMFVFPKGMVHFQFNNGTDVVARAFSAFGSATPGTISLPAALFGSGIDDTILDKSMHTDQATVDQLKQDQAPPSPRPSPGSSSSAAAALLPSRWAITLLLCFAASYYFYF.

The first 25 residues, 1–25, serve as a signal peptide directing secretion; it reads MMMSSRSSVSLGVLLLLAVILSAGA. In terms of domain architecture, Cupin type-1 spans 53–201; sequence KNLVTGNSGD…SMHTDQATVD (149 aa). His-100, His-102, and Glu-107 together coordinate Mn(2+). A glycan (N-linked (GlcNAc...) asparagine) is linked at Asn-126. Position 148 (His-148) interacts with Mn(2+). N-linked (GlcNAc...) asparagine glycosylation occurs at Asn-153.

It belongs to the germin family. As to quaternary structure, oligomer (believed to be a pentamer but probably hexamer).

It is found in the secreted. It localises to the extracellular space. The protein resides in the apoplast. Its function is as follows. May play a role in plant defense. Probably has no oxalate oxidase activity even if the active site is conserved. The sequence is that of Germin-like protein 9-1 from Oryza sativa subsp. japonica (Rice).